The primary structure comprises 328 residues: Tetraacyldisaccharide 4'-kinase (328 aa).

Position 55 to 62 (threonine 55 to threonine 62) interacts with ATP.

The protein belongs to the LpxK family.

It carries out the reaction a lipid A disaccharide + ATP = a lipid IVA + ADP + H(+). It participates in glycolipid biosynthesis; lipid IV(A) biosynthesis; lipid IV(A) from (3R)-3-hydroxytetradecanoyl-[acyl-carrier-protein] and UDP-N-acetyl-alpha-D-glucosamine: step 6/6. Transfers the gamma-phosphate of ATP to the 4'-position of a tetraacyldisaccharide 1-phosphate intermediate (termed DS-1-P) to form tetraacyldisaccharide 1,4'-bis-phosphate (lipid IVA). The polypeptide is Tetraacyldisaccharide 4'-kinase (Escherichia coli O6:K15:H31 (strain 536 / UPEC)).